A 78-amino-acid chain; its full sequence is Omega-conotoxin PnVIA (78 aa).

The signal sequence occupies residues 1–22; that stretch reads MKLTCMMIIAVLFLTAWTFVMA. Residues 23–45 constitute a propeptide that is removed on maturation; that stretch reads DDPRDEPEARDEMNPAASKLNER. Intrachain disulfides connect C47-C65, C54-C69, and C64-C73. At Q76 the chain carries Glutamine amide.

Expressed by the venom duct.

The protein resides in the secreted. Functionally, omega-conotoxins act at presynaptic membranes, they bind and block voltage-gated calcium channels (Cav). Acts on high voltage-activated (HVA) calcium currents in molluscan neurons. This chain is Omega-conotoxin PnVIA, found in Conus pennaceus (Feathered cone).